Consider the following 466-residue polypeptide: Chromogranin-A (466 aa).

Positions 1–18 (MRSSAALALLLCAGQVFA) are cleaved as a signal peptide. A disulfide bond links cysteine 35 and cysteine 56. The disordered stretch occupies residues 91 to 443 (AQQQQQQQQQ…ANRRAEDQEL (353 aa)). Over residues 92–111 (QQQQQQQQQQQQQQQQQQQQ) the composition is skewed to low complexity. Serine 114 bears the Phosphoserine mark. Residues 131–155 (KHGDAASEAPSKDTVEKREDSDKGQ) show a composition bias toward basic and acidic residues. The segment covering 177-213 (ESSMMGNSQSPGEDTANNTQSPTSLPSQEHGIPQTTE) has biased composition (polar residues). The residue at position 215 (serine 215) is a Phosphoserine. Acidic residues predominate over residues 233-247 (KEEEEEEKEEEEEEK). The span at 248–259 (EEKAIAREKAGP) shows a compositional bias: basic and acidic residues. Phosphoserine is present on residues serine 288 and serine 312. Residues 305-314 (GKGELEHSQQ) are compositionally biased toward basic and acidic residues. Glycine 332 carries the post-translational modification Glycine amide. Basic and acidic residues predominate over residues 351 to 378 (RLSREWEDKRWSRMDQLAKELTAEKRLE). Phosphoserine occurs at positions 353 and 386. Methionine sulfoxide is present on methionine 387. The segment covering 412–440 (SSREDSVEARGDFEEKKEEEGSANRRAED) has biased composition (basic and acidic residues). Residues serine 413, serine 417, and serine 433 each carry the phosphoserine modification. O-linked (Xyl...) (chondroitin sulfate) serine glycosylation occurs at serine 433. Glutamine 441 carries the post-translational modification Pyrrolidone carboxylic acid. Serine 447 carries the phosphoserine modification.

This sequence belongs to the chromogranin/secretogranin protein family. As to quaternary structure, self-interacts; self-assembly is promoted in vitro by chondroitin sulfate attachment which occurs at mildly acidic pH conditions. Interacts with SCG3; this interaction is optimal in conditions mimicking the lumenal milieu of the trans-Golgi network, i.e. pH 5.5 and 10 mM Ca(+2). Interacts with ITPR1 in the secretory granules. O-glycosylated; contains chondroitin sulfate (CS). CS attachment is pH-dependent, being observed at mildly acidic conditions of pH 5 but not at neutral pH, and promotes self-assembly in vitro. In terms of tissue distribution, expressed in the brain and adrenal and pituitary glands.

It localises to the cytoplasmic vesicle. It is found in the secretory vesicle. Its subcellular location is the neuronal dense core vesicle. The protein resides in the secreted. Strongly inhibits glucose induced insulin release from the pancreas. Its function is as follows. Catestatin inhibits catecholamine release from chromaffin cells and noradrenergic neurons by acting as a non-competitive nicotinic cholinergic antagonist. Can induce mast cell migration, degranulation and production of cytokines and chemokines. In terms of biological role, serpinin regulates granule biogenesis in endocrine cells by up-regulating the transcription of protease nexin 1 (SERPINE2) via a cAMP-PKA-SP1 pathway. This leads to inhibition of granule protein degradation in the Golgi complex which in turn promotes granule formation. Serpinin and pGlu-serpinin can enhance both myocardial contractility (inotropy) and relaxation (lusitropy) and this cardio-stimulation requires a beta 1-adrenergic receptor/adenylate cyclase/cAMP/PKA pathway. In Rattus norvegicus (Rat), this protein is Chromogranin-A (Chga).